The primary structure comprises 129 residues: uncharacterized protein (129 aa).

It to M.pneumoniae MPN_376 N-terminal region.

This is an uncharacterized protein from Mycoplasma pneumoniae (strain ATCC 29342 / M129 / Subtype 1) (Mycoplasmoides pneumoniae).